Consider the following 470-residue polypeptide: FRIGIDA-like protein 1 (470 aa).

The stretch at 336–369 forms a coiled coil; that stretch reads KDQNLESEFTQEKVEERVEELEKNKALRKRNTTN. A disordered region spans residues 355–400; sequence ELEKNKALRKRNTTNPPKQEPQQKGKKRTRDCKNGSQVPVPSQQLL. The segment covering 388–400 has biased composition (polar residues); sequence NGSQVPVPSQQLL.

It belongs to the Frigida family. Component of the transcription activator complex FRI-C composed of FRI, FRL1, SUF4, FLX and FES1. Interacts with FRI and SUF4. As to expression, expressed during seed development and in dry seed. Preferentially expressed in the chalazal endosperm during early stages of seed development.

Its function is as follows. Required for FRI-mediated up-regulation of FLC transcripts, but not redundant with FRI and only partially redundant with FRL2. Required for the stabilization of the FRI-C complex. This is FRIGIDA-like protein 1 (FRL1) from Arabidopsis thaliana (Mouse-ear cress).